A 359-amino-acid chain; its full sequence is Protein-arginine kinase (359 aa).

The region spanning isoleucine 25 to leucine 257 is the Phosphagen kinase C-terminal domain. ATP-binding positions include serine 28 to arginine 32, histidine 93, arginine 128, arginine 179 to methionine 183, and arginine 210 to glutamate 215. An RDXXRA motif of the pArg binding pocket involved in allosteric regulation motif is present at residues arginine 340–alanine 345.

This sequence belongs to the ATP:guanido phosphotransferase family.

The enzyme catalyses L-arginyl-[protein] + ATP = N(omega)-phospho-L-arginyl-[protein] + ADP + H(+). Appears to be allosterically activated by the binding of pArg-containing polypeptides to the pArg-binding pocket localized in the C-terminal domain of McsB. Functionally, catalyzes the specific phosphorylation of arginine residues in proteins. The sequence is that of Protein-arginine kinase from Syntrophomonas wolfei subsp. wolfei (strain DSM 2245B / Goettingen).